The following is a 188-amino-acid chain: uncharacterized protein (188 aa).

Over residues 1 to 15 (MVSSKDKIKEELKQE) the composition is skewed to basic and acidic residues. The tract at residues 1-21 (MVSSKDKIKEELKQEEPEENV) is disordered.

This is an uncharacterized protein from Saccharolobus islandicus (Sulfolobus islandicus).